The sequence spans 475 residues: Bifunctional protein HldE (475 aa).

The segment at 1–321 is ribokinase; sequence MADKIDISLY…RALHQITASH (321 aa). 197–200 contacts ATP; the sequence is NLKE. D266 is a catalytic residue. The interval 346–475 is cytidylyltransferase; that stretch reads MTNGCFDILH…TSRLVEKMLN (130 aa).

It in the N-terminal section; belongs to the carbohydrate kinase PfkB family. This sequence in the C-terminal section; belongs to the cytidylyltransferase family. In terms of assembly, homodimer.

It catalyses the reaction D-glycero-beta-D-manno-heptose 7-phosphate + ATP = D-glycero-beta-D-manno-heptose 1,7-bisphosphate + ADP + H(+). The enzyme catalyses D-glycero-beta-D-manno-heptose 1-phosphate + ATP + H(+) = ADP-D-glycero-beta-D-manno-heptose + diphosphate. It functions in the pathway nucleotide-sugar biosynthesis; ADP-L-glycero-beta-D-manno-heptose biosynthesis; ADP-L-glycero-beta-D-manno-heptose from D-glycero-beta-D-manno-heptose 7-phosphate: step 1/4. The protein operates within nucleotide-sugar biosynthesis; ADP-L-glycero-beta-D-manno-heptose biosynthesis; ADP-L-glycero-beta-D-manno-heptose from D-glycero-beta-D-manno-heptose 7-phosphate: step 3/4. Its function is as follows. Catalyzes the phosphorylation of D-glycero-D-manno-heptose 7-phosphate at the C-1 position to selectively form D-glycero-beta-D-manno-heptose-1,7-bisphosphate. In terms of biological role, catalyzes the ADP transfer from ATP to D-glycero-beta-D-manno-heptose 1-phosphate, yielding ADP-D-glycero-beta-D-manno-heptose. The polypeptide is Bifunctional protein HldE (Coxiella burnetii (strain RSA 331 / Henzerling II)).